We begin with the raw amino-acid sequence, 329 residues long: Glutamyl-Q tRNA(Asp) synthetase (329 aa).

Residues R8–S12 and E44 contribute to the L-glutamate site. A 'HIGH' region motif is present at residues P11–N21. Residues C100, C102, Y129, and C133 each contribute to the Zn(2+) site. L-glutamate is bound by residues Y196 and R214. Positions R252 to R256 match the 'KMSKS' region motif. Residue K255 coordinates ATP.

It belongs to the class-I aminoacyl-tRNA synthetase family. GluQ subfamily. Requires Zn(2+) as cofactor.

In terms of biological role, catalyzes the tRNA-independent activation of glutamate in presence of ATP and the subsequent transfer of glutamate onto a tRNA(Asp). Glutamate is transferred on the 2-amino-5-(4,5-dihydroxy-2-cyclopenten-1-yl) moiety of the queuosine in the wobble position of the QUC anticodon. The sequence is that of Glutamyl-Q tRNA(Asp) synthetase from Rhodopirellula baltica (strain DSM 10527 / NCIMB 13988 / SH1).